The primary structure comprises 557 residues: Arginine--tRNA ligase (557 aa).

The 'HIGH' region signature appears at 132–142; sequence ANPTGDLHLGH.

This sequence belongs to the class-I aminoacyl-tRNA synthetase family. Monomer.

It is found in the cytoplasm. It carries out the reaction tRNA(Arg) + L-arginine + ATP = L-arginyl-tRNA(Arg) + AMP + diphosphate. This Bacillus pumilus (strain SAFR-032) protein is Arginine--tRNA ligase.